The primary structure comprises 188 residues: MGGTFDPIHHGHLVAASEVADRFGLDEVIFVPTGQPWQKADEPVSPAEDRYLMTVIATASNPRFQVSRVDIDRSGPTYTIDTLRDLRAVCGAKVQLFFITGADALEKILSWKDLDEAFELAHFIGVTRPGFRLSDAHLPADTVSLVQVPAMAISSTDCRARVSRSAPLWYLVPDGVVQYIAKRRLYQQ.

Belongs to the NadD family.

It carries out the reaction nicotinate beta-D-ribonucleotide + ATP + H(+) = deamido-NAD(+) + diphosphate. The protein operates within cofactor biosynthesis; NAD(+) biosynthesis; deamido-NAD(+) from nicotinate D-ribonucleotide: step 1/1. In terms of biological role, catalyzes the reversible adenylation of nicotinate mononucleotide (NaMN) to nicotinic acid adenine dinucleotide (NaAD). The protein is Probable nicotinate-nucleotide adenylyltransferase of Salinispora tropica (strain ATCC BAA-916 / DSM 44818 / JCM 13857 / NBRC 105044 / CNB-440).